Reading from the N-terminus, the 99-residue chain is Transcription and mRNA export factor SUS1 (99 aa).

Belongs to the ENY2 family. As to quaternary structure, component of the nuclear pore complex (NPC)-associated TREX-2 complex (transcription and export complex 2), composed of at least SUS1, SAC3, THP1, SEM1, and CDC31. TREX-2 contains 2 SUS1 chains. The TREX-2 complex interacts with the nucleoporin NUP1. Component of the 1.8 MDa SAGA transcription coactivator-HAT complex. SAGA is built of 5 distinct domains with specialized functions. Within the SAGA complex, SUS1, SGF11, SGF73 and UBP8 form an additional subcomplex of SAGA called the DUB module (deubiquitination module). Interacts directly with THP1, SAC3, SGF11, and with the RNA polymerase II.

The protein resides in the nucleus. It is found in the nucleoplasm. It localises to the cytoplasm. Its subcellular location is the P-body. In terms of biological role, involved in mRNA export coupled transcription activation by association with both the TREX-2 and the SAGA complexes. At the promoters, SAGA is required for recruitment of the basal transcription machinery. It influences RNA polymerase II transcriptional activity through different activities such as TBP interaction and promoter selectivity, interaction with transcription activators, and chromatin modification through histone acetylation and deubiquitination. Within the SAGA complex, participates in a subcomplex required for deubiquitination of H2B and for the maintenance of steady-state H3 methylation levels. The TREX-2 complex functions in docking export-competent ribonucleoprotein particles (mRNPs) to the nuclear entrance of the nuclear pore complex (nuclear basket). TREX-2 participates in mRNA export and accurate chromatin positioning in the nucleus by tethering genes to the nuclear periphery. May also be involved in cytoplasmic mRNA decay by interaction with components of P-bodies. The polypeptide is Transcription and mRNA export factor SUS1 (Eremothecium gossypii (strain ATCC 10895 / CBS 109.51 / FGSC 9923 / NRRL Y-1056) (Yeast)).